Consider the following 356-residue polypeptide: Nucleosome assembly protein 1;4 (356 aa).

A coiled-coil region spans residues V34–E88. The short motif at L55–Q70 is the Nuclear export signal element. Residues K230–K235 carry the Nuclear localization signal motif. Residues F304–E356 are disordered. Acidic residues predominate over residues A309–E343. Positions K347 to E356 are enriched in basic residues.

It belongs to the nucleosome assembly protein (NAP) family. Can form homomeric and heteromeric protein complexes with NAP1;3. Binds histones H2A and H2B in vivo. Also able to bind histones H1 and H4 in vitro. Interacts with CYCB1;1 and with alpha tubulin.

The protein resides in the nucleus. Its subcellular location is the cytoplasm. Functionally, may modulate chromatin structure by regulation of nucleosome assembly/disassembly. Could function together with B-type cyclins in the regulation of microtubule dynamics. The sequence is that of Nucleosome assembly protein 1;4 (NAP1;4) from Nicotiana tabacum (Common tobacco).